A 310-amino-acid chain; its full sequence is 4-diphosphocytidyl-2-C-methyl-D-erythritol kinase (310 aa).

The active site involves K11. 95-105 (PIGAGLAGGSA) lines the ATP pocket. D137 is a catalytic residue.

Belongs to the GHMP kinase family. IspE subfamily.

The catalysed reaction is 4-CDP-2-C-methyl-D-erythritol + ATP = 4-CDP-2-C-methyl-D-erythritol 2-phosphate + ADP + H(+). The protein operates within isoprenoid biosynthesis; isopentenyl diphosphate biosynthesis via DXP pathway; isopentenyl diphosphate from 1-deoxy-D-xylulose 5-phosphate: step 3/6. Its function is as follows. Catalyzes the phosphorylation of the position 2 hydroxy group of 4-diphosphocytidyl-2C-methyl-D-erythritol. This Acaryochloris marina (strain MBIC 11017) protein is 4-diphosphocytidyl-2-C-methyl-D-erythritol kinase.